Here is a 526-residue protein sequence, read N- to C-terminus: Reticulocyte-binding protein homolog 5 (526 aa).

The signal sequence occupies residues 1–24 (MIRIKKKLILTIIYIHLFILNRLS). The interval 33 to 51 (KNQENNLTLLPIKSTEEEK) is mediates interaction with human BSG. N-linked (GlcNAc...) asparagine glycosylation is found at asparagine 38 and asparagine 214. Intrachain disulfides connect cysteine 224/cysteine 317 and cysteine 345/cysteine 351. The span at 259–279 (EIDDKSEETDDETEEVEDSIQ) shows a compositional bias: acidic residues. A disordered region spans residues 259 to 294 (EIDDKSEETDDETEEVEDSIQDTDSNHTPSNKKKND). Asparagine 297 is a glycosylation site (N-linked (GlcNAc...) asparagine).

In terms of assembly, forms a complex composed of RH5, P113 and human BSG/basigin; the complex bridges the merozoite and host erythrocyte membranes. Within the complex, interacts (via C-terminus) with human BSG/basigin isoform 2 (via the extracellular domain); the interaction is independent of BSG glycosylation status. Weakly interacts with P.troglodytes BSG but not with G.gorilla BSG. Also, interacts (via N-terminus) with P113; the interaction tethers RH5 to the merozoite membrane. Component of the PfRH5 adhesion complex composed of 1 copy of CyRPA, RH5 and RIPR; the complex is formed during merozoite invasion of host erythrocytes specifically at the interface between the parasite and host membranes. Within the complex, interacts with CyRPA. CyRPA recruits RIPR to the RH5-P113-BSG complex; the formation of the PfRH5 adhesion complex increases the affinity of RH5 for BSG and probably leads to the release of RH5 from P113 while maintaining the interaction of the PfRH5 adhesion complex with BSG. Post-translationally, cleaved into a 45kDa form during merozoite invasion of host erythrocyte.

The protein resides in the secreted. It is found in the cytoplasmic vesicle. Its subcellular location is the secretory vesicle. The protein localises to the rhoptry lumen. It localises to the host cell membrane. Functionally, essential for the invasion of host erythrocytes by blood stage merozoites. By binding P113 at the surface of the merozoite and human BSG/basigin on the erythrocyte membrane, leads to the establishment of a tight junction between the merozoite and host erythrocyte membranes. In addition, the interaction with BSG results in BSG dimerization which triggers an increase in intracellular Ca(2+) in the erythrocyte. This essential step leads to a rearrangement of the erythrocyte cytoskeleton required for the merozoite invasion. This chain is Reticulocyte-binding protein homolog 5, found in Plasmodium falciparum (isolate 3D7).